The chain runs to 144 residues: C-C motif chemokine 25 (144 aa).

Residues 1–23 (MKLWLFACLVACFVGAWMPVVHA) form the signal peptide. 2 disulfides stabilise this stretch: C30–C58 and C31–C73. The disordered stretch occupies residues 98 to 144 (KSASDSQTERKKSNHMKSKVENPNSTSVRSATLGHPRMVMMPRKTNN). The segment covering 118–127 (ENPNSTSVRS) has biased composition (polar residues).

It belongs to the intercrine beta (chemokine CC) family. In terms of tissue distribution, specifically expressed by thymic dendritic cells. High levels in thymus and small intestine.

It is found in the secreted. Its function is as follows. Potentially involved in T-cell development. Recombinant protein shows chemotactic activity on thymocytes, macrophages, THP-1 cells, and dendritics cells but is inactive on peripheral blood lymphocytes and neutrophils. Binds to CCR9. Binds to atypical chemokine receptor ACKR4 and mediates the recruitment of beta-arrestin (ARRB1/2) to ACKR4. This Mus musculus (Mouse) protein is C-C motif chemokine 25 (Ccl25).